We begin with the raw amino-acid sequence, 218 residues long: Peptide deformylase (218 aa).

Positions 130 and 172 each coordinate Fe cation. The active site involves Glu173. His176 lines the Fe cation pocket.

This sequence belongs to the polypeptide deformylase family. It depends on Fe(2+) as a cofactor.

It catalyses the reaction N-terminal N-formyl-L-methionyl-[peptide] + H2O = N-terminal L-methionyl-[peptide] + formate. Its function is as follows. Removes the formyl group from the N-terminal Met of newly synthesized proteins. Requires at least a dipeptide for an efficient rate of reaction. N-terminal L-methionine is a prerequisite for activity but the enzyme has broad specificity at other positions. The protein is Peptide deformylase of Bifidobacterium adolescentis (strain ATCC 15703 / DSM 20083 / NCTC 11814 / E194a).